Here is a 1088-residue protein sequence, read N- to C-terminus: RNA-directed RNA polymerase (1088 aa).

One can recognise a RdRp catalytic domain in the interval 501 to 687 (LSYGDVTRFL…AKRYLAGGKI (187 aa)).

This sequence belongs to the reoviridae RNA-directed RNA polymerase family. In terms of assembly, interacts with VP3 (Potential). Interacts with VP2; this interaction activates VP1. Interacts with NSP5; this interaction is probably necessary for the formation of functional virus factories. Interacts with NSP2; this interaction is weak. Requires Mg(2+) as cofactor.

The protein localises to the virion. It carries out the reaction RNA(n) + a ribonucleoside 5'-triphosphate = RNA(n+1) + diphosphate. Functionally, RNA-directed RNA polymerase that is involved in both transcription and genome replication. Together with VP3 capping enzyme, forms an enzyme complex positioned near the channels situated at each of the five-fold vertices of the core. Following infection, the outermost layer of the virus is lost, leaving a double-layered particle (DLP) made up of the core and VP6 shell. VP1 then catalyzes the transcription of fully conservative plus-strand genomic RNAs that are extruded through the DLP's channels into the cytoplasm where they function as mRNAs for translation of viral proteins. One copy of each of the viral (+)RNAs is also recruited during core assembly, together with newly synthesized polymerase complexes and VP2. The polymerase of these novo-formed particles catalyzes the synthesis of complementary minus-strands leading to dsRNA formation. To do so, the polymerase specifically recognizes and binds 4 bases 5'-UGUG-3' in the conserved 3'-sequence of plus-strand RNA templates. VP2 presumably activates the autoinhibited VP1-RNA complex to coordinate packaging and genome replication. Once dsRNA synthesis is complete, the polymerase switches to the transcriptional mode, thus providing secondary transcription. In Rotavirus A (strain RVA/Human/Japan/KU/1995/G1P1A[8]) (RV-A), this protein is RNA-directed RNA polymerase.